A 325-amino-acid polypeptide reads, in one-letter code: Glycerol-3-phosphate dehydrogenase [NAD(P)+] (325 aa).

Ser14, Phe15, Arg35, and Lys109 together coordinate NADPH. Positions 109 and 137 each coordinate sn-glycerol 3-phosphate. Ala141 serves as a coordination point for NADPH. Sn-glycerol 3-phosphate contacts are provided by Lys192, Asp247, Ser257, Arg258, and Asn259. The Proton acceptor role is filled by Lys192. Arg258 serves as a coordination point for NADPH. Residues Leu282 and Glu284 each contribute to the NADPH site.

The protein belongs to the NAD-dependent glycerol-3-phosphate dehydrogenase family.

It is found in the cytoplasm. It catalyses the reaction sn-glycerol 3-phosphate + NAD(+) = dihydroxyacetone phosphate + NADH + H(+). It carries out the reaction sn-glycerol 3-phosphate + NADP(+) = dihydroxyacetone phosphate + NADPH + H(+). Its pathway is membrane lipid metabolism; glycerophospholipid metabolism. In terms of biological role, catalyzes the reduction of the glycolytic intermediate dihydroxyacetone phosphate (DHAP) to sn-glycerol 3-phosphate (G3P), the key precursor for phospholipid synthesis. The sequence is that of Glycerol-3-phosphate dehydrogenase [NAD(P)+] from Rickettsia conorii (strain ATCC VR-613 / Malish 7).